Consider the following 312-residue polypeptide: Phosphoribosylaminoimidazole-succinocarboxamide synthase (312 aa).

It belongs to the SAICAR synthetase family.

It carries out the reaction 5-amino-1-(5-phospho-D-ribosyl)imidazole-4-carboxylate + L-aspartate + ATP = (2S)-2-[5-amino-1-(5-phospho-beta-D-ribosyl)imidazole-4-carboxamido]succinate + ADP + phosphate + 2 H(+). The protein operates within purine metabolism; IMP biosynthesis via de novo pathway; 5-amino-1-(5-phospho-D-ribosyl)imidazole-4-carboxamide from 5-amino-1-(5-phospho-D-ribosyl)imidazole-4-carboxylate: step 1/2. This chain is Phosphoribosylaminoimidazole-succinocarboxamide synthase, found in Legionella pneumophila (strain Paris).